A 264-amino-acid polypeptide reads, in one-letter code: Thymidylate synthase (264 aa).

Position 21 (Arg21) interacts with dUMP. Residue His51 coordinates (6R)-5,10-methylene-5,6,7,8-tetrahydrofolate. Arg126 to Arg127 provides a ligand contact to dUMP. The active-site Nucleophile is Cys146. DUMP-binding positions include Arg166–Asp169, Asn177, and His207–Tyr209. Residue Asp169 participates in (6R)-5,10-methylene-5,6,7,8-tetrahydrofolate binding. Position 263 (Ala263) interacts with (6R)-5,10-methylene-5,6,7,8-tetrahydrofolate.

The protein belongs to the thymidylate synthase family. Bacterial-type ThyA subfamily. Homodimer.

It localises to the cytoplasm. The catalysed reaction is dUMP + (6R)-5,10-methylene-5,6,7,8-tetrahydrofolate = 7,8-dihydrofolate + dTMP. The protein operates within pyrimidine metabolism; dTTP biosynthesis. Functionally, catalyzes the reductive methylation of 2'-deoxyuridine-5'-monophosphate (dUMP) to 2'-deoxythymidine-5'-monophosphate (dTMP) while utilizing 5,10-methylenetetrahydrofolate (mTHF) as the methyl donor and reductant in the reaction, yielding dihydrofolate (DHF) as a by-product. This enzymatic reaction provides an intracellular de novo source of dTMP, an essential precursor for DNA biosynthesis. The protein is Thymidylate synthase of Methylobacterium nodulans (strain LMG 21967 / CNCM I-2342 / ORS 2060).